The sequence spans 465 residues: MSRLLQTPFLPSVSLPTKTRSSVTGFRVKPRIIPIQAKIREIFMPALSSTMTEGKIVSWVKSEGDKLNKGESVVVVESDKADMDVETFYDGYLAAIMVEEGGVAPVGSAIALLAETEDEIADAKAKASGGGGGGDSKAPPASPPTAAVEAPVSVEKKVAAAPVSIKAVAASAVHPASEGGKRIVASPYAKKLAKELKVELAGLVGSGPMGRIVAKDVEAVAAGGGVQAAVAVKEVVAAPGVELGSVVPFTTMQGAVSRNMVESLGVPTFRVGYTISTDALDALYKKIKSKGVTMTALLAKATALALAKHPVVNSSCRDGNSFVYNSSINVAVAVAIDGGLITPVLQNADKVDIYSLSRKWKELVDKARAKQLQPQEYNTGTFTLSNLGMFGVDRFDAILPPGTGAIMAVGASQPSVVATKDGRIGMKNQMQVNVTADHRVIYGADLAQFLQTLASIIEDPKDLTF.

Residues 1–31 (MSRLLQTPFLPSVSLPTKTRSSVTGFRVKPR) constitute a chloroplast transit peptide. The region spanning 39–114 (IREIFMPALS…PVGSAIALLA (76 aa)) is the Lipoyl-binding domain. Residue K80 is modified to N6-lipoyllysine. The disordered stretch occupies residues 123–148 (AKAKASGGGGGGDSKAPPASPPTAAV). Low complexity predominate over residues 136–148 (SKAPPASPPTAAV). Residues 184–221 (VASPYAKKLAKELKVELAGLVGSGPMGRIVAKDVEAVA) form the Peripheral subunit-binding (PSBD) domain. Residue H438 is part of the active site.

The protein belongs to the 2-oxoacid dehydrogenase family. (R)-lipoate serves as cofactor.

It localises to the plastid. Its subcellular location is the chloroplast stroma. The catalysed reaction is N(6)-[(R)-dihydrolipoyl]-L-lysyl-[protein] + acetyl-CoA = N(6)-[(R)-S(8)-acetyldihydrolipoyl]-L-lysyl-[protein] + CoA. In terms of biological role, the pyruvate dehydrogenase complex catalyzes the overall conversion of pyruvate to acetyl-CoA and CO(2). It contains multiple copies of three enzymatic components: pyruvate dehydrogenase (E1), dihydrolipoamide acetyltransferase (E2) and lipoamide dehydrogenase (E3). This chain is Dihydrolipoyllysine-residue acetyltransferase component 5 of pyruvate dehydrogenase complex, chloroplastic (EMB3003), found in Arabidopsis thaliana (Mouse-ear cress).